A 129-amino-acid chain; its full sequence is Small ribosomal subunit protein uS8 (129 aa).

Belongs to the universal ribosomal protein uS8 family. Part of the 30S ribosomal subunit. Contacts proteins S5 and S12.

Functionally, one of the primary rRNA binding proteins, it binds directly to 16S rRNA central domain where it helps coordinate assembly of the platform of the 30S subunit. The sequence is that of Small ribosomal subunit protein uS8 from Mesoplasma florum (strain ATCC 33453 / NBRC 100688 / NCTC 11704 / L1) (Acholeplasma florum).